A 468-amino-acid chain; its full sequence is MSKGTLFDKVWDLHTVATLPSGQTQLFIGLHLIHEVTSPQAFAMLKERGLKVLFPERTIATVDHIVPTDNQARPFADSLAEEMMQALETNCQEHGIRFYNIGSGSQGIVHVIAPELGLTQPGMTIACGDSHTSTHGAFGAIAFGIGTSQVRDVLASQTLSLSKLKVRKIEVNGSLQPGVYAKDVILHIIRTLGVKAGVGYAYEYAGTTFEQMSMEERMTVCNMAIEGGARCGYVNPDAVTFAYLKEREFAPQTDWDTAQQWWQSIASDPDAVYDDVVVFDAADIAPTVTWGITPGQGIAVDQPLPLPEQLPASEQAIAEEAYQYMDLIPGQKLLGTKIDVCFIGSCTNGRISDLRAAAEIAQGRRVVPGLKAFVVPGSERVKQQAEAEGLDQIFQAAGFEWREPGCSMCLAMNPDKLQGRQISASSSNRNFKGRQGSATGRTLLMSPAMVAAAAVTGEVTDVRELLGQ.

Residues Cys-346, Cys-406, and Cys-409 each contribute to the [4Fe-4S] cluster site.

Belongs to the aconitase/IPM isomerase family. LeuC type 1 subfamily. Heterodimer of LeuC and LeuD. [4Fe-4S] cluster is required as a cofactor.

It catalyses the reaction (2R,3S)-3-isopropylmalate = (2S)-2-isopropylmalate. Its pathway is amino-acid biosynthesis; L-leucine biosynthesis; L-leucine from 3-methyl-2-oxobutanoate: step 2/4. Catalyzes the isomerization between 2-isopropylmalate and 3-isopropylmalate, via the formation of 2-isopropylmaleate. This is 3-isopropylmalate dehydratase large subunit from Cyanothece sp. (strain PCC 7425 / ATCC 29141).